Reading from the N-terminus, the 284-residue chain is Prestalk D11 protein (284 aa).

The first 25 residues, 1–25 (MLNKLILLLILSSCLVLSVKSEVNV), serve as a signal peptide directing secretion. Residues 25–64 (VDCSLVRCAQPICKPHYRLNMTDSCCGRCEPCTDVACTLQ) form an A-1 repeat. The B-1 repeat unit spans residues 65–82 (VKYCQDGEVPTGCCPCTL). Residues 88–126 (DCSLVKCARPVCKPYYRLNMTDSCCGRCEPCTGVACTLQ) form an A-2 repeat. The stretch at 127 to 144 (IKYCKDGEVPTGCCPCTP) is one B-2 repeat. The C-1 repeat unit spans residues 145 to 159 (QPTKKPDCSKVPCPK). One copy of the B-3 repeat lies at 161–178 (LKYCQEGELPTGCCPCTP). Residues 179–193 (QPTKKPDCSRVPCPK) form a C-2 repeat. One copy of the B-4 repeat lies at 195–212 (LKYCKEGELPTGCCPCTP). Residues 213 to 228 (QPTKKPDCSDVMCTMD) form a C-3 repeat. The stretch at 229–246 (IRYCKNGELPTGCCPCTP) is one B-5 repeat. A C-4 repeat occupies 247-262 (QETKVPDCSKAMCTMD). The stretch at 263-278 (IKYCKPGEKPFGCCPC) is one B-6 repeat.

The chain is Prestalk D11 protein (ampA) from Dictyostelium discoideum (Social amoeba).